Here is a 315-residue protein sequence, read N- to C-terminus: Methionyl-tRNA formyltransferase (315 aa).

Residue 113–116 participates in (6S)-5,6,7,8-tetrahydrofolate binding; sequence SLLP.

The protein belongs to the Fmt family.

It carries out the reaction L-methionyl-tRNA(fMet) + (6R)-10-formyltetrahydrofolate = N-formyl-L-methionyl-tRNA(fMet) + (6S)-5,6,7,8-tetrahydrofolate + H(+). Functionally, attaches a formyl group to the free amino group of methionyl-tRNA(fMet). The formyl group appears to play a dual role in the initiator identity of N-formylmethionyl-tRNA by promoting its recognition by IF2 and preventing the misappropriation of this tRNA by the elongation apparatus. The protein is Methionyl-tRNA formyltransferase of Cronobacter sakazakii (strain ATCC BAA-894) (Enterobacter sakazakii).